Consider the following 359-residue polypeptide: Biotin synthase (359 aa).

Positions 1–23 are disordered; that stretch reads MSVADSSAADSVAAPDTADTSSS. The region spanning 76-302 is the Radical SAM core domain; sequence YFGNTVQLYF…VNPDRELRIA (227 aa). [4Fe-4S] cluster contacts are provided by Cys94, Cys98, and Cys101. Cys138, Cys170, Cys230, and Arg300 together coordinate [2Fe-2S] cluster.

This sequence belongs to the radical SAM superfamily. Biotin synthase family. Homodimer. [4Fe-4S] cluster is required as a cofactor. [2Fe-2S] cluster serves as cofactor.

The catalysed reaction is (4R,5S)-dethiobiotin + (sulfur carrier)-SH + 2 reduced [2Fe-2S]-[ferredoxin] + 2 S-adenosyl-L-methionine = (sulfur carrier)-H + biotin + 2 5'-deoxyadenosine + 2 L-methionine + 2 oxidized [2Fe-2S]-[ferredoxin]. It functions in the pathway cofactor biosynthesis; biotin biosynthesis; biotin from 7,8-diaminononanoate: step 2/2. Its function is as follows. Catalyzes the conversion of dethiobiotin (DTB) to biotin by the insertion of a sulfur atom into dethiobiotin via a radical-based mechanism. The sequence is that of Biotin synthase from Rhodopirellula baltica (strain DSM 10527 / NCIMB 13988 / SH1).